The sequence spans 431 residues: STE20-related kinase adapter protein alpha (431 aa).

A phosphoserine mark is found at Ser-2 and Ser-46. Residues 69-379 (YELLTVIGKG…ASTLLNHSFF (311 aa)) form the Protein kinase domain. Residues 310-347 (LTMSPSRSVANSGLSDSLTTSTPRPSNGDSPSHPYHRT) form a disordered region. Residues 312 to 339 (MSPSRSVANSGLSDSLTTSTPRPSNGDS) are compositionally biased toward polar residues. Phosphothreonine; by LKB1 is present on residues Thr-329 and Thr-401. Thr-419 carries the phosphothreonine modification.

Belongs to the protein kinase superfamily. STE Ser/Thr protein kinase family. STE20 subfamily. In terms of assembly, component of a trimeric complex composed of STK11/LKB1, STRAD (STRADA or STRADB) and CAB39/MO25 (CAB39/MO25alpha or CAB39L/MO25beta): the complex tethers STK11/LKB1 in the cytoplasm and stimulates its catalytic activity.

The protein resides in the nucleus. The protein localises to the cytoplasm. Pseudokinase which, in complex with CAB39/MO25 (CAB39/MO25alpha or CAB39L/MO25beta), binds to and activates STK11/LKB1. Adopts a closed conformation typical of active protein kinases and binds STK11/LKB1 as a pseudosubstrate, promoting conformational change of STK11/LKB1 in an active conformation. This chain is STE20-related kinase adapter protein alpha (STRADA), found in Pongo abelii (Sumatran orangutan).